The chain runs to 130 residues: Small ribosomal subunit protein uS11 (130 aa).

Belongs to the universal ribosomal protein uS11 family. In terms of assembly, part of the 30S ribosomal subunit. Interacts with proteins S7 and S18. Binds to IF-3.

In terms of biological role, located on the platform of the 30S subunit, it bridges several disparate RNA helices of the 16S rRNA. Forms part of the Shine-Dalgarno cleft in the 70S ribosome. This chain is Small ribosomal subunit protein uS11, found in Helicobacter hepaticus (strain ATCC 51449 / 3B1).